We begin with the raw amino-acid sequence, 289 residues long: Pre-mRNA-splicing factor cwf23 (289 aa).

Residues 9–74 (DYYELLGINE…QLRKAYDSER (66 aa)) enclose the J domain. The segment covering 129-148 (ESANLRRQRENRLREEQEQS) has biased composition (basic and acidic residues). 2 disordered regions span residues 129–161 (ESANLRRQRENRLREEQEQSKRRKQETPSSKIS) and 269–289 (KQKHKQKQKENERKATSTMNA).

This sequence belongs to the DnaJ family. In terms of assembly, belongs to the 40S cdc5-associated complex (or cwf complex), a spliceosome sub-complex reminiscent of a late-stage spliceosome composed of the U2, U5 and U6 snRNAs and at least brr2, cdc5, cwf2/prp3, cwf3/syf1, cwf4/syf3, cwf5/ecm2, spp42/cwf6, cwf7/spf27, cwf8, cwf9, cwf10, cwf11, cwf12, prp45/cwf13, cwf14, cwf15, cwf16, cwf17, cwf18, cwf19, cwf20, cwf21, cwf22, cwf23, cwf24, cwf25, cwf26, cyp7/cwf27, cwf28, cwf29/ist3, lea1, msl1, prp5/cwf1, prp10, prp12/sap130, prp17, prp22, sap61, sap62, sap114, sap145, slu7, smb1, smd1, smd3, smf1, smg1 and syf2.

The protein localises to the cytoplasm. It is found in the nucleus. Involved in pre-mRNA splicing. May be involved in endoplasmic reticulum-associated protein degradation (ERAD) and required for growth at low and high temperatures. The sequence is that of Pre-mRNA-splicing factor cwf23 (cwf23) from Schizosaccharomyces pombe (strain 972 / ATCC 24843) (Fission yeast).